The primary structure comprises 98 residues: ATP synthase subunit alpha, chloroplastic (98 aa).

The protein belongs to the ATPase alpha/beta chains family. In terms of assembly, F-type ATPases have 2 components, CF(1) - the catalytic core - and CF(0) - the membrane proton channel. CF(1) has five subunits: alpha(3), beta(3), gamma(1), delta(1), epsilon(1). CF(0) has four main subunits: a, b, b' and c.

The protein resides in the plastid. It is found in the chloroplast thylakoid membrane. It carries out the reaction ATP + H2O + 4 H(+)(in) = ADP + phosphate + 5 H(+)(out). Functionally, produces ATP from ADP in the presence of a proton gradient across the membrane. The alpha chain is a regulatory subunit. In Populus euphratica (Euphrates poplar), this protein is ATP synthase subunit alpha, chloroplastic (atpA).